The sequence spans 49 residues: Large ribosomal subunit protein bL33B (49 aa).

It belongs to the bacterial ribosomal protein bL33 family.

The protein is Large ribosomal subunit protein bL33B of Lactobacillus gasseri (strain ATCC 33323 / DSM 20243 / BCRC 14619 / CIP 102991 / JCM 1131 / KCTC 3163 / NCIMB 11718 / NCTC 13722 / AM63).